The primary structure comprises 364 residues: MQERHTEQDYRALLIADTPIIDVRAPIEFEQGAMPAAINLPLMNNDERAAVGTCYKQQGSDAALALGHKLVAGEIRQQRMDAWRAACLQNPQGILCCARGGQRSHIVQSWLHAAGIDYPLVEGGYKALRQTAIQATIELAQKPIVLIGGCTGSGKTLLVQQQPNGVDLEGLARHRGSAFGRTLQPQLSQASFENLLAAEMLKTDARQNLRLWVLEDESRMIGSNHLPECLRERMTQAAIAVVEDPFEIRLERLNEEYFLRMHHDFTHAYGDEQGWQEYCEYLHHGLSAIKRRLGLQRYNELAARLDAALTTQLTTGSTDGHLAWLVPLLEEYYDPMYRYQLEKKAEKVVFRGEWAEVAEWVKSR.

The region spanning 14–137 (LIADTPIIDV…LRQTAIQATI (124 aa)) is the Rhodanese domain. C97 (S-selanylcysteine intermediate) is an active-site residue.

This sequence belongs to the SelU family. Monomer.

It catalyses the reaction 5-methylaminomethyl-2-thiouridine(34) in tRNA + selenophosphate + (2E)-geranyl diphosphate + H2O + H(+) = 5-methylaminomethyl-2-selenouridine(34) in tRNA + (2E)-thiogeraniol + phosphate + diphosphate. It carries out the reaction 5-methylaminomethyl-2-thiouridine(34) in tRNA + (2E)-geranyl diphosphate = 5-methylaminomethyl-S-(2E)-geranyl-thiouridine(34) in tRNA + diphosphate. The catalysed reaction is 5-methylaminomethyl-S-(2E)-geranyl-thiouridine(34) in tRNA + selenophosphate + H(+) = 5-methylaminomethyl-2-(Se-phospho)selenouridine(34) in tRNA + (2E)-thiogeraniol. The enzyme catalyses 5-methylaminomethyl-2-(Se-phospho)selenouridine(34) in tRNA + H2O = 5-methylaminomethyl-2-selenouridine(34) in tRNA + phosphate. Functionally, involved in the post-transcriptional modification of the uridine at the wobble position (U34) of tRNA(Lys), tRNA(Glu) and tRNA(Gln). Catalyzes the conversion of 2-thiouridine (S2U-RNA) to 2-selenouridine (Se2U-RNA). Acts in a two-step process involving geranylation of 2-thiouridine (S2U) to S-geranyl-2-thiouridine (geS2U) and subsequent selenation of the latter derivative to 2-selenouridine (Se2U) in the tRNA chain. The chain is tRNA 2-selenouridine synthase from Escherichia coli (strain SMS-3-5 / SECEC).